An 83-amino-acid chain; its full sequence is uncharacterized protein (83 aa).

2 consecutive transmembrane segments (helical) span residues 23-43 (FSLWFTHITFIGLFLMFQLIK) and 56-76 (TIFVVTCIIAILLWIIYCVFL).

The protein localises to the cell membrane. This is an uncharacterized protein from Bacillus subtilis (strain 168).